The primary structure comprises 231 residues: Probable methylthioribulose-1-phosphate dehydratase (231 aa).

Position 90 (Cys-90) interacts with substrate. His-108 and His-110 together coordinate Zn(2+). Glu-132 acts as the Proton donor/acceptor in catalysis. Residue His-188 coordinates Zn(2+).

This sequence belongs to the aldolase class II family. MtnB subfamily. It depends on Zn(2+) as a cofactor.

The protein localises to the cytoplasm. The catalysed reaction is 5-(methylsulfanyl)-D-ribulose 1-phosphate = 5-methylsulfanyl-2,3-dioxopentyl phosphate + H2O. It participates in amino-acid biosynthesis; L-methionine biosynthesis via salvage pathway; L-methionine from S-methyl-5-thio-alpha-D-ribose 1-phosphate: step 2/6. Functionally, catalyzes the dehydration of methylthioribulose-1-phosphate (MTRu-1-P) into 2,3-diketo-5-methylthiopentyl-1-phosphate (DK-MTP-1-P). The chain is Probable methylthioribulose-1-phosphate dehydratase from Anopheles gambiae (African malaria mosquito).